A 334-amino-acid chain; its full sequence is Serine/threonine-protein kinase (334 aa).

Residues 53–333 form the Protein kinase domain; the sequence is FEVLQPLQSG…DEILNFGMWT (281 aa). ATP-binding positions include 59 to 67 and Lys82; that span reads LQSGSEGRV. Residue Asp167 is the Proton acceptor of the active site.

The protein belongs to the protein kinase superfamily. Ser/Thr protein kinase family.

The enzyme catalyses L-seryl-[protein] + ATP = O-phospho-L-seryl-[protein] + ADP + H(+). It carries out the reaction L-threonyl-[protein] + ATP = O-phospho-L-threonyl-[protein] + ADP + H(+). In terms of biological role, able to phosphorylate in vitro the major virion phosphoprotein phosphorylated in vivo. The chain is Serine/threonine-protein kinase (PK) from Sus scrofa (Pig).